The chain runs to 409 residues: Sulfide-quinone reductase (409 aa).

Residues 8 to 12, 34 to 35, and cysteine 129 each bind FAD; these read GGRFG and NK. The Cysteine persulfide intermediate role is filled by cysteine 178. Residues asparagine 271, aspartate 307, and glycine 317 each coordinate FAD. Catalysis depends on cysteine 350, which acts as the Cysteine persulfide intermediate.

Belongs to the SQRD family. In terms of assembly, monomer. Requires FAD as cofactor.

The protein localises to the membrane. It catalyses the reaction n a quinone + n hydrogen sulfide + n H(+) = polysulfur(n-2) + n a quinol. With respect to regulation, inhibited by the quinone analog 2-heptyl-4-hydroxyquinolone N-oxide (HQNO). Inactivated by iodoacetamide treatment. Inhibited by KCN. In terms of biological role, catalyzes the oxidation of sulfides, such as hydrogen sulfide, with the help of a quinone. Has the highest activity with caldariella quinone and decylubiquinone, and lower activity with naphtoquinones. Consecutive reaction cycles lead to the accumulation of a polysulfide product on the active site Cys residues; these products are released when they exceed a critical length, typically as cyclooctasulfur. The polypeptide is Sulfide-quinone reductase (Acidianus ambivalens (Desulfurolobus ambivalens)).